Here is an 85-residue protein sequence, read N- to C-terminus: Small ribosomal subunit protein bS16 (85 aa).

Belongs to the bacterial ribosomal protein bS16 family.

This is Small ribosomal subunit protein bS16 from Metamycoplasma arthritidis (strain 158L3-1) (Mycoplasma arthritidis).